The following is a 299-amino-acid chain: NmrA-like family domain-containing protein 1 (299 aa).

NADP(+) is bound by residues 11–16 (GATGAQ), 37–41 (RDPGQ), 58–59 (DQ), 79–81 (TNY), Lys-92, Lys-133, and 155–158 (YFEN). Residues 153–189 (PCYFENLLSYFLPQKAPDGRSYLLSLPMGDVPIDGMS) form an interaction with ASS1 region.

Belongs to the NmrA-type oxidoreductase family. In terms of assembly, homodimer. Interacts with ASS1. Interaction is enhanced by low NADPH/NADP(+) ratios, which results in inhibition of ASS1 activity.

It localises to the cytoplasm. Its subcellular location is the perinuclear region. The protein localises to the nucleus. In terms of biological role, redox sensor protein. Undergoes restructuring and subcellular redistribution in response to changes in intracellular NADPH/NADP(+) levels. At low NADPH concentrations the protein is found mainly as a monomer, and binds argininosuccinate synthase (ASS1), the enzyme involved in nitric oxide synthesis. Association with ASS1 impairs its activity and reduces the production of nitric oxide, which subsecuently prevents apoptosis. Under normal NADPH concentrations, the protein is found as a dimer and hides the binding site for ASS1. The homodimer binds one molecule of NADPH. Has higher affinity for NADPH than for NADP(+). Binding to NADPH is necessary to form a stable dimer. This chain is NmrA-like family domain-containing protein 1 (NMRAL1), found in Bos taurus (Bovine).